The sequence spans 86 residues: RNA-binding protein Hfq (86 aa).

A Sm domain is found at 9-68 (DPYLNTLRKEKVGVSIYLVNGIKLQGTIESFDQFVILLKNTVSQMVYKHAISTVVPVRPI).

Belongs to the Hfq family. In terms of assembly, homohexamer.

In terms of biological role, RNA chaperone that binds small regulatory RNA (sRNAs) and mRNAs to facilitate mRNA translational regulation in response to envelope stress, environmental stress and changes in metabolite concentrations. Also binds with high specificity to tRNAs. The sequence is that of RNA-binding protein Hfq from Pseudomonas fluorescens (strain ATCC BAA-477 / NRRL B-23932 / Pf-5).